The sequence spans 831 residues: MSNYDFKKIEQFSQSLWDFSSCDFQRKKYYVLSMFPYPSGKLHIGHLRNYVIGDVLARYKRSQGYNVLHPIGWDAFGLPAEKAAINSNIHPRIWTEKNIAKMRTSLKSIGLSYDWSRELSTCSPKYYEHEQKFFLAFLKAGLAYRKNSEVNWDPIDKTVLANEQVIDGRGWRSGAVVVKRKIPQWFLKISDFSEELLKGLESLTGWPEKVKTMQTNWIGKSEGAVIKFSISGYEERFIEVFTTRPETIFGASFCAISVNHPLVNELNLLSNAEREILRIQTTCESDHYDDNKNFSGTTNLEKVHEQKLGILTKIKVKHPFSGDELPLYVANFVFAEYGSGAIFGCPAHDTRDFAFAQQYNLPCLRVISAKCTNTALPYCLEEGVMCNSNFLDGMQVIEARKFIIEKISSIGIGEAKNSYRLRDWGISRQRYWGCPIPVVYCEKCSMQPVKVEDLPVTLPEEVEFTVQGNPLEHHPTWKYTNCPKCGGPAVRDTDTFDTFFESSWYFAAFCSKEGGIVKESCKRFLPVDMYIGGIEHAILHLLYARFFTRALNKCGYIDIVEPFRNLLTQGMVCHETYQNSSGEYLYPEEAKSLLEKGEKVLVGKIEKMSKSKKNVVDLEEIVSKYGADAARFFILSDNPPENSFGWSDRGINASFKFLQRIKNLVERYLSSKNSGEVQTGQNVKIQINKIICDMTKYMDEIKLNCAVAKIHELVNLLSASGALSKETIHVLLRILEPFAPHLAEYLASKLENNVILYGSPWVAYNEVLTQSDAVTLMVRKNGKFVQLLEVKKDSSEEEIISQAKRLIKNAVVDKVIYVPGKMVNFLCSSPG.

Residues 36 to 46 (PYPSGKLHIGH) carry the 'HIGH' region motif. Residues 607 to 611 (KMSKS) carry the 'KMSKS' region motif. Residue K610 participates in ATP binding.

The protein belongs to the class-I aminoacyl-tRNA synthetase family.

Its subcellular location is the cytoplasm. The catalysed reaction is tRNA(Leu) + L-leucine + ATP = L-leucyl-tRNA(Leu) + AMP + diphosphate. In Neorickettsia sennetsu (strain ATCC VR-367 / Miyayama) (Ehrlichia sennetsu), this protein is Leucine--tRNA ligase.